A 43-amino-acid chain; its full sequence is METATLVAIPISCLLVSFTGYALYTAFGQPSRELRDPFEEHED.

Residues 5 to 27 (TLVAIPISCLLVSFTGYALYTAF) traverse the membrane as a helical segment.

The protein belongs to the PsbN family.

It is found in the plastid. Its subcellular location is the chloroplast thylakoid membrane. Its function is as follows. May play a role in photosystem I and II biogenesis. This is Protein PsbN from Sphagnum cuspidatum (Bog moss).